The following is a 488-amino-acid chain: 3-octaprenyl-4-hydroxybenzoate carboxy-lyase (488 aa).

Asn-172 serves as a coordination point for Mn(2+). Residues 175 to 177 (IYR), 189 to 191 (RWL), and 194 to 195 (RG) each bind prenylated FMN. Glu-238 serves as a coordination point for Mn(2+). Asp-287 acts as the Proton donor in catalysis.

This sequence belongs to the UbiD family. Homohexamer. It depends on prenylated FMN as a cofactor. The cofactor is Mn(2+).

The protein resides in the cell membrane. It carries out the reaction a 4-hydroxy-3-(all-trans-polyprenyl)benzoate + H(+) = a 2-(all-trans-polyprenyl)phenol + CO2. Its pathway is cofactor biosynthesis; ubiquinone biosynthesis. Functionally, catalyzes the decarboxylation of 3-octaprenyl-4-hydroxy benzoate to 2-octaprenylphenol, an intermediate step in ubiquinone biosynthesis. This chain is 3-octaprenyl-4-hydroxybenzoate carboxy-lyase, found in Legionella pneumophila subsp. pneumophila (strain Philadelphia 1 / ATCC 33152 / DSM 7513).